A 263-amino-acid polypeptide reads, in one-letter code: Probable ABC transporter permease protein ycf63 (263 aa).

5 consecutive transmembrane segments (helical) span residues 43–63 (IVGP…SMVF), 70–89 (EFLY…IAFT), 150–170 (ILSI…AFVM), 188–208 (ISDF…IGFI), and 230–250 (SVVT…YFMF).

It belongs to the MlaE permease family.

Its subcellular location is the plastid. It is found in the chloroplast membrane. In terms of biological role, could be part of an ABC transporter complex. This is Probable ABC transporter permease protein ycf63 (ycf63) from Pyropia yezoensis (Susabi-nori).